The sequence spans 431 residues: Gamma-glutamyl phosphate reductase (431 aa).

This sequence belongs to the gamma-glutamyl phosphate reductase family.

Its subcellular location is the cytoplasm. It catalyses the reaction L-glutamate 5-semialdehyde + phosphate + NADP(+) = L-glutamyl 5-phosphate + NADPH + H(+). The protein operates within amino-acid biosynthesis; L-proline biosynthesis; L-glutamate 5-semialdehyde from L-glutamate: step 2/2. Catalyzes the NADPH-dependent reduction of L-glutamate 5-phosphate into L-glutamate 5-semialdehyde and phosphate. The product spontaneously undergoes cyclization to form 1-pyrroline-5-carboxylate. The protein is Gamma-glutamyl phosphate reductase of Acaryochloris marina (strain MBIC 11017).